Here is an 878-residue protein sequence, read N- to C-terminus: Ecdysone receptor (878 aa).

Disordered regions lie at residues 1–27 (MKRR…SSSN) and 209–254 (GLGM…SKKG). Residues 1-263 (MKRRWSNNGG…GPAPRVQEEL (263 aa)) are modulating. 2 consecutive NR C4-type zinc fingers follow at residues 264–284 (CLVC…CEGC) and 300–324 (CKFG…LKKC). The segment at residues 264 to 336 (CLVCGDRASG…VGMRPECVVP (73 aa)) is a DNA-binding region (nuclear receptor). Residues 344-374 (RREKKAQKEKDKMTTSPSSQHGGNGSLASGG) are disordered. Over residues 365–374 (GGNGSLASGG) the composition is skewed to gly residues. The region spanning 419–654 (NQLAVIYKLI…FLEEIWDVHA (236 aa)) is the NR LBD domain. Low complexity-rich tracts occupy residues 698 to 709 (TSAAAAAAQHQP) and 728 to 759 (QTQP…QLQP). Residues 698–759 (TSAAAAAAQH…QPQLQTQLQP (62 aa)) form a disordered region.

It belongs to the nuclear hormone receptor family. NR1 subfamily. As to quaternary structure, heterodimer of USP and ECR. Only the heterodimer is capable of high-affinity binding to ecdysone. Interacts with trr in an ecdysone-dependent manner. Upon ecdysone stimulation, interacts with Nup98. In terms of tissue distribution, isoform B1 predominates over isoform A in larval tissues, imaginal histoblast nests and midgut islands. Isoform A predominates over B1 in imaginal disks, and the larval prothoracic gland.

Its subcellular location is the nucleus. Its function is as follows. Receptor for ecdysone. Binds to ecdysone response elements (ECRES) following ecdysone-binding, and recruitment of a complex containing the histone methyltransferase trr, leads to activate transcription of target genes. The sequence is that of Ecdysone receptor (EcR) from Drosophila melanogaster (Fruit fly).